We begin with the raw amino-acid sequence, 87 residues long: Potassium channel toxin Tdi-beta-KTx (87 aa).

The first 19 residues, 1-19 (MERKLALLLLLGMITLASS), serve as a signal peptide directing secretion. Residues 20–27 (GLREKHVQ) constitute a propeptide that is removed on maturation. Residues 53-87 (QFGCPAYEGYCMNHCQDIERHDGSCHGFKCKCEKS) form the BetaSPN-type CS-alpha/beta domain. 3 disulfides stabilise this stretch: Cys-56/Cys-77, Cys-63/Cys-82, and Cys-67/Cys-84.

In terms of tissue distribution, expressed by the venom gland.

The protein resides in the secreted. Its function is as follows. Inhibits voltage-gated potassium channel. This Tityus discrepans (Venezuelan scorpion) protein is Potassium channel toxin Tdi-beta-KTx.